A 320-amino-acid polypeptide reads, in one-letter code: ATP-dependent 6-phosphofructokinase (320 aa).

G11 lines the ATP pocket. 21–25 (RAVVR) provides a ligand contact to ADP. Residues 72 to 73 (RY) and 102 to 105 (GDGS) each bind ATP. Mg(2+) is bound at residue D103. Substrate is bound at residue 125–127 (TID). The active-site Proton acceptor is D127. R154 serves as a coordination point for ADP. Residues R162 and 169-171 (MGR) each bind substrate. Residues 185 to 187 (GAD), R211, and 213 to 215 (KKH) contribute to the ADP site. Substrate is bound by residues E222, R243, and 249 to 252 (HVVR).

This sequence belongs to the phosphofructokinase type A (PFKA) family. ATP-dependent PFK group I subfamily. Prokaryotic clade 'B1' sub-subfamily. As to quaternary structure, homotetramer. The cofactor is Mg(2+).

The protein resides in the cytoplasm. It catalyses the reaction beta-D-fructose 6-phosphate + ATP = beta-D-fructose 1,6-bisphosphate + ADP + H(+). It functions in the pathway carbohydrate degradation; glycolysis; D-glyceraldehyde 3-phosphate and glycerone phosphate from D-glucose: step 3/4. Allosterically activated by ADP and other diphosphonucleosides, and allosterically inhibited by phosphoenolpyruvate. Catalyzes the phosphorylation of D-fructose 6-phosphate to fructose 1,6-bisphosphate by ATP, the first committing step of glycolysis. This is ATP-dependent 6-phosphofructokinase from Enterococcus faecalis (strain ATCC 700802 / V583).